A 188-amino-acid chain; its full sequence is Capsid protein (188 aa).

This sequence belongs to the tymoviruses capsid protein family.

It is found in the virion. In terms of biological role, self-assembles to form a T=3 icosahedral capsid composed of 180 copies of the capsid protein. The capsid encapsulates the single-stranded RNA genome. The protein is Capsid protein of Theobroma cacao (Cacao).